A 356-amino-acid polypeptide reads, in one-letter code: tRNA N6-adenosine threonylcarbamoyltransferase (356 aa).

Fe cation contacts are provided by H116 and H120. Substrate is bound by residues 139–143 (IVSGG), D174, G187, D191, and N281. A Fe cation-binding site is contributed by D309.

The protein belongs to the KAE1 / TsaD family. It depends on Fe(2+) as a cofactor.

Its subcellular location is the cytoplasm. The catalysed reaction is L-threonylcarbamoyladenylate + adenosine(37) in tRNA = N(6)-L-threonylcarbamoyladenosine(37) in tRNA + AMP + H(+). In terms of biological role, required for the formation of a threonylcarbamoyl group on adenosine at position 37 (t(6)A37) in tRNAs that read codons beginning with adenine. Is involved in the transfer of the threonylcarbamoyl moiety of threonylcarbamoyl-AMP (TC-AMP) to the N6 group of A37, together with TsaE and TsaB. TsaD likely plays a direct catalytic role in this reaction. The polypeptide is tRNA N6-adenosine threonylcarbamoyltransferase (Frankia casuarinae (strain DSM 45818 / CECT 9043 / HFP020203 / CcI3)).